We begin with the raw amino-acid sequence, 319 residues long: Ribonuclease Z (319 aa).

Residues His-62, His-64, Asp-66, His-67, His-139, Asp-209, and His-268 each contribute to the Zn(2+) site. The active-site Proton acceptor is Asp-66.

Belongs to the RNase Z family. Homodimer. Zn(2+) serves as cofactor.

The catalysed reaction is Endonucleolytic cleavage of RNA, removing extra 3' nucleotides from tRNA precursor, generating 3' termini of tRNAs. A 3'-hydroxy group is left at the tRNA terminus and a 5'-phosphoryl group is left at the trailer molecule.. Its function is as follows. Zinc phosphodiesterase, which displays some tRNA 3'-processing endonuclease activity. Probably involved in tRNA maturation, by removing a 3'-trailer from precursor tRNA. The protein is Ribonuclease Z of Pseudomonas putida (strain GB-1).